The primary structure comprises 176 residues: Nutrient stress-induced DNA-binding protein (176 aa).

The protein belongs to the Dps family. In terms of assembly, hexamer.

Its function is as follows. Involved in protection of chromosomal DNA from damage under nutrient-limited and oxidative stress conditions. Binds heme. The polypeptide is Nutrient stress-induced DNA-binding protein (dpsA) (Synechococcus sp. (strain ATCC 27144 / PCC 6301 / SAUG 1402/1) (Anacystis nidulans)).